A 118-amino-acid polypeptide reads, in one-letter code: Phosphoribosyl-AMP cyclohydrolase (118 aa).

Position 87 (Asp87) interacts with Mg(2+). Cys88 serves as a coordination point for Zn(2+). Mg(2+) is bound by residues Asp89 and Asp91. 2 residues coordinate Zn(2+): Cys104 and Cys111.

Belongs to the PRA-CH family. As to quaternary structure, homodimer. Mg(2+) is required as a cofactor. The cofactor is Zn(2+).

It is found in the cytoplasm. The catalysed reaction is 1-(5-phospho-beta-D-ribosyl)-5'-AMP + H2O = 1-(5-phospho-beta-D-ribosyl)-5-[(5-phospho-beta-D-ribosylamino)methylideneamino]imidazole-4-carboxamide. It participates in amino-acid biosynthesis; L-histidine biosynthesis; L-histidine from 5-phospho-alpha-D-ribose 1-diphosphate: step 3/9. Functionally, catalyzes the hydrolysis of the adenine ring of phosphoribosyl-AMP. The chain is Phosphoribosyl-AMP cyclohydrolase from Corynebacterium glutamicum (strain ATCC 13032 / DSM 20300 / JCM 1318 / BCRC 11384 / CCUG 27702 / LMG 3730 / NBRC 12168 / NCIMB 10025 / NRRL B-2784 / 534).